Consider the following 858-residue polypeptide: Leucine--tRNA ligase (858 aa).

Positions Pro42–His52 match the 'HIGH' region motif. The 'KMSKS' region motif lies at Lys618–Ser622. Lys621 contributes to the ATP binding site.

It belongs to the class-I aminoacyl-tRNA synthetase family.

The protein localises to the cytoplasm. The enzyme catalyses tRNA(Leu) + L-leucine + ATP = L-leucyl-tRNA(Leu) + AMP + diphosphate. The sequence is that of Leucine--tRNA ligase from Aliivibrio salmonicida (strain LFI1238) (Vibrio salmonicida (strain LFI1238)).